The following is a 491-amino-acid chain: Lysine--tRNA ligase (491 aa).

Glutamate 399 and glutamate 406 together coordinate Mg(2+).

It belongs to the class-II aminoacyl-tRNA synthetase family. As to quaternary structure, homodimer. Requires Mg(2+) as cofactor.

The protein resides in the cytoplasm. It catalyses the reaction tRNA(Lys) + L-lysine + ATP = L-lysyl-tRNA(Lys) + AMP + diphosphate. In Chloroflexus aurantiacus (strain ATCC 29366 / DSM 635 / J-10-fl), this protein is Lysine--tRNA ligase.